Reading from the N-terminus, the 797-residue chain is Phenylalanine--tRNA ligase beta subunit (797 aa).

A tRNA-binding domain is found at 40–154 (MEGLSKLVVG…ADAKVGDSIF (115 aa)). One can recognise a B5 domain in the interval 407-482 (PILPKVSITL…RIYGYDNLPS (76 aa)). Mg(2+) is bound by residues aspartate 460, aspartate 466, glutamate 469, and glutamate 470. Residues 704–797 (PKVQAVHRDI…LVEKLDIEIR (94 aa)) form the FDX-ACB domain.

This sequence belongs to the phenylalanyl-tRNA synthetase beta subunit family. Type 1 subfamily. In terms of assembly, tetramer of two alpha and two beta subunits. Mg(2+) serves as cofactor.

The protein resides in the cytoplasm. The enzyme catalyses tRNA(Phe) + L-phenylalanine + ATP = L-phenylalanyl-tRNA(Phe) + AMP + diphosphate + H(+). This chain is Phenylalanine--tRNA ligase beta subunit, found in Lactococcus lactis subsp. lactis (strain IL1403) (Streptococcus lactis).